The sequence spans 135 residues: RxLR effector protein Avr10 (135 aa).

An N-terminal signal peptide occupies residues methionine 1–alanine 19. Over residues glycine 34–lysine 43 the composition is skewed to polar residues. Residues glycine 34–alanine 64 form a disordered region. The RxLR-dEER signature appears at arginine 44–arginine 63. Residues leucine 46–alanine 55 are compositionally biased toward basic and acidic residues.

The protein belongs to the RxLR effector family.

Its subcellular location is the secreted. It localises to the host nucleus. The protein localises to the host cytoplasm. Its function is as follows. Secreted effector that acts as an elicitor of hypersensitive response (HR) specifically on plants carrying defense protein R10. Enhances P.infestans colonization of Nicotiana benthamiana leaves. The polypeptide is RxLR effector protein Avr10 (Phytophthora infestans (strain T30-4) (Potato late blight agent)).